Here is a 358-residue protein sequence, read N- to C-terminus: Protein phosphatase 1 regulatory subunit 3G (358 aa).

Residues 1–71 (MEPIGARLSL…KEEAAPQEQE (71 aa)) form a disordered region. Low complexity predominate over residues 11-29 (EAPGPAPFREAPPAEELPA). Ser-86 is modified (phosphoserine). Positions 210 to 350 (AERLQRQRVC…NNAGANYTLR (141 aa)) constitute a CBM21 domain. Over residues 270–280 (EPLEPQQPEAP) the composition is skewed to low complexity. Residues 270 to 295 (EPLEPQQPEAPSGASEPGSGDAKKEP) are disordered.

Its function is as follows. Glycogen-targeting subunit for protein phosphatase 1 (PP1). Involved in the regulation of hepatic glycogenesis in a manner coupled to the fasting-feeding cycle and distinct from other glycogen-targeting subunits. In Homo sapiens (Human), this protein is Protein phosphatase 1 regulatory subunit 3G (PPP1R3G).